A 255-amino-acid chain; its full sequence is tRNA uridine(34) hydroxylase (255 aa).

The 95-residue stretch at 125 to 219 (AAPDTLLIDT…YLEGIPESES (95 aa)) folds into the Rhodanese domain. Cys179 serves as the catalytic Cysteine persulfide intermediate.

The protein belongs to the TrhO family.

It catalyses the reaction uridine(34) in tRNA + AH2 + O2 = 5-hydroxyuridine(34) in tRNA + A + H2O. Catalyzes oxygen-dependent 5-hydroxyuridine (ho5U) modification at position 34 in tRNAs. This chain is tRNA uridine(34) hydroxylase, found in Nitrobacter hamburgensis (strain DSM 10229 / NCIMB 13809 / X14).